Consider the following 403-residue polypeptide: MAIFREFDVNDHHDRSLEDRRRHRQLVEKSIKDNLADIISEESIIGQSKNKKVKIPIKGIKEYQFIYGDNSSGVGSGDGSQKKGDRIGKAIKDRDGKGNQGAGNQEGEDMYEIEVTIEDVLDYLMEDLELPLMDKKKFSQILSNNSPKKSGYQRKGINPRLAKKRTVVEKLKRQQGTKRALREIHGELESDPKNKLPENTTIKSRFPFKQDDLRYFRVKRKPKLELNAAIICVMDTSGSMDSTRKFLARSFFFVLYRFIKMKYNNVEVKFISHSTSAKVVTENEFFHKVESGGTYISSGLKKALEVIEENYNPAYWNVYTFYVSDGDNWSEDNSLALKCAKDLCKVCNLFSYAEIIPSPYGSSIKHIFQNKITDNNFTVVTIHEKQDLWKSLKKILNKELEER.

A disordered region spans residues 71-109 (SSGVGSGDGSQKKGDRIGKAIKDRDGKGNQGAGNQEGED). Over residues 80-97 (SQKKGDRIGKAIKDRDGK) the composition is skewed to basic and acidic residues.

The protein belongs to the UPF0229 family.

The chain is UPF0229 protein CKR_0568 from Clostridium kluyveri (strain NBRC 12016).